Here is a 730-residue protein sequence, read N- to C-terminus: Arginine decarboxylase 1B, chloroplastic (730 aa).

Residues 1 to 37 constitute a chloroplast transit peptide; that stretch reads MPALGCCVDAAVSPPPGYSFLWDSSLPAPEIFPSGVP. The residue at position 157 (K157) is an N6-(pyridoxal phosphate)lysine. Residues S309, G346, and 395–398 contribute to the pyridoxal 5'-phosphate site; that span reads ESGR. Residue 460 to 461 participates in substrate binding; that stretch reads YA. C548 serves as the catalytic Proton donor; shared with dimeric partner. Position 549 (D549) interacts with substrate. A pyridoxal 5'-phosphate-binding site is contributed by Y590.

Belongs to the Orn/Lys/Arg decarboxylase class-II family. SpeA subfamily. Requires Mg(2+) as cofactor. Pyridoxal 5'-phosphate serves as cofactor.

Its subcellular location is the plastid. The protein resides in the chloroplast. It catalyses the reaction L-arginine + H(+) = agmatine + CO2. Its pathway is alkaloid biosynthesis; nicotine biosynthesis. It functions in the pathway amine and polyamine biosynthesis; agmatine biosynthesis; agmatine from L-arginine: step 1/1. Functionally, involved in the biosynthesis of pyridine alkaloid natural products, leading mainly to the production of anabasine, anatabine, nicotine and nornicotine, effective deterrents against herbivores with antiparasitic and pesticide properties (neurotoxins); nornicotine serves as the precursor in the synthesis of the carcinogen compound N'-nitrosonornicotine (NNN). Required for the biosynthesis of putrescine. Catalyzes the first step of polyamine (PA) biosynthesis to produce putrescine from arginine. In Nicotiana tabacum (Common tobacco), this protein is Arginine decarboxylase 1B, chloroplastic.